A 200-amino-acid chain; its full sequence is Ciliary neurotrophic factor (200 aa).

This sequence belongs to the CNTF family. In terms of tissue distribution, nervous system.

The protein localises to the cytoplasm. Its function is as follows. CNTF is a survival factor for various neuronal cell types. Seems to prevent the degeneration of motor axons after axotomy. In Rattus norvegicus (Rat), this protein is Ciliary neurotrophic factor (Cntf).